Here is a 52-residue protein sequence, read N- to C-terminus: uncharacterized protein (52 aa).

This is an uncharacterized protein from Rickettsia conorii (strain ATCC VR-613 / Malish 7).